A 541-amino-acid polypeptide reads, in one-letter code: Glutamyl-tRNA(Gln) amidotransferase subunit A, chloroplastic/mitochondrial (541 aa).

Residues Lys-121 and Ser-196 each act as charge relay system in the active site. Ser-220 (acyl-ester intermediate) is an active-site residue.

Belongs to the amidase family. GatA subfamily. In terms of assembly, subunit of the heterotrimeric GatCAB amidotransferase (AdT) complex, composed of A, B and C subunits.

Its subcellular location is the mitochondrion. The protein resides in the plastid. The protein localises to the chloroplast stroma. The catalysed reaction is L-glutamyl-tRNA(Gln) + L-glutamine + ATP + H2O = L-glutaminyl-tRNA(Gln) + L-glutamate + ADP + phosphate + H(+). Allows the formation of correctly charged Gln-tRNA(Gln) through the transamidation of misacylated Glu-tRNA(Gln) in chloroplasts and mitochondria. The reaction takes place in the presence of glutamine and ATP through an activated gamma-phospho-Glu-tRNA(Gln). The chain is Glutamyl-tRNA(Gln) amidotransferase subunit A, chloroplastic/mitochondrial from Sorghum bicolor (Sorghum).